The following is a 301-amino-acid chain: Putative S-adenosyl-L-methionine-dependent methyltransferase MAP_3777 (301 aa).

S-adenosyl-L-methionine contacts are provided by residues Asp126 and 155–156 (DL).

The protein belongs to the UPF0677 family.

In terms of biological role, exhibits S-adenosyl-L-methionine-dependent methyltransferase activity. The chain is Putative S-adenosyl-L-methionine-dependent methyltransferase MAP_3777 from Mycolicibacterium paratuberculosis (strain ATCC BAA-968 / K-10) (Mycobacterium paratuberculosis).